We begin with the raw amino-acid sequence, 311 residues long: Malate dehydrogenase (311 aa).

Residue 10–15 coordinates NAD(+); the sequence is GAGHTG. Substrate is bound by residues Arg-85 and Arg-91. NAD(+) is bound by residues Asn-98 and 121–123; that span reads LTN. Residues Asn-123 and Arg-154 each coordinate substrate. The Proton acceptor role is filled by His-178.

The protein belongs to the LDH/MDH superfamily. MDH type 3 family.

The enzyme catalyses (S)-malate + NAD(+) = oxaloacetate + NADH + H(+). Functionally, catalyzes the reversible oxidation of malate to oxaloacetate. The chain is Malate dehydrogenase from Staphylococcus carnosus (strain TM300).